A 495-amino-acid chain; its full sequence is Ribosomal protein uS12 methylthiotransferase RimO (495 aa).

The MTTase N-terminal domain occupies 5–121; it reads RTVALVTLGC…ISDRLQTILN (117 aa). [4Fe-4S] cluster-binding residues include Cys14, Cys50, and Cys84. The interval 145 to 183 is disordered; the sequence is QSAGADVALPGHGAPEGLPEDLPEGLAPESGPRAPLRRR. The Radical SAM core domain occupies 184–415; sequence LDGSPVASVK…RLAEELVAQR (232 aa). Cys198, Cys202, and Cys205 together coordinate [4Fe-4S] cluster. Residues 417 to 484 form the TRAM domain; the sequence is EERVGETVHV…GVDLVAEPLP (68 aa).

This sequence belongs to the methylthiotransferase family. RimO subfamily. [4Fe-4S] cluster serves as cofactor.

It localises to the cytoplasm. The catalysed reaction is L-aspartate(89)-[ribosomal protein uS12]-hydrogen + (sulfur carrier)-SH + AH2 + 2 S-adenosyl-L-methionine = 3-methylsulfanyl-L-aspartate(89)-[ribosomal protein uS12]-hydrogen + (sulfur carrier)-H + 5'-deoxyadenosine + L-methionine + A + S-adenosyl-L-homocysteine + 2 H(+). In terms of biological role, catalyzes the methylthiolation of an aspartic acid residue of ribosomal protein uS12. The protein is Ribosomal protein uS12 methylthiotransferase RimO of Streptomyces avermitilis (strain ATCC 31267 / DSM 46492 / JCM 5070 / NBRC 14893 / NCIMB 12804 / NRRL 8165 / MA-4680).